A 118-amino-acid polypeptide reads, in one-letter code: Urease subunit beta (118 aa).

This sequence belongs to the urease beta subunit family. As to quaternary structure, heterotrimer of UreA (gamma), UreB (beta) and UreC (alpha) subunits. Three heterotrimers associate to form the active enzyme.

The protein resides in the cytoplasm. It carries out the reaction urea + 2 H2O + H(+) = hydrogencarbonate + 2 NH4(+). It functions in the pathway nitrogen metabolism; urea degradation; CO(2) and NH(3) from urea (urease route): step 1/1. This chain is Urease subunit beta, found in Aliivibrio fischeri (strain ATCC 700601 / ES114) (Vibrio fischeri).